Reading from the N-terminus, the 128-residue chain is T-cell leukemia/lymphoma protein 1B (128 aa).

It belongs to the TCL1 family. As to quaternary structure, interacts with AKT1 and AKT2 (via PH domain). Does not interact with AKT3. In terms of tissue distribution, expressed in a variety of tissues including placenta and testis.

Enhances the phosphorylation and activation of AKT1 and AKT2. The polypeptide is T-cell leukemia/lymphoma protein 1B (TCL1B) (Homo sapiens (Human)).